The chain runs to 154 residues: Keratin-associated protein 9-4 (154 aa).

15 tandem repeats follow at residues 8-12, 13-17, 18-22, 37-41, 42-46, 51-55, 56-60, 61-65, 70-74, 75-79, 80-84, 85-89, 129-133, 134-138, and 148-152. The 15 X 5 AA repeats of C-C-[RQVGE]-[SPTN]-[TASPF] stretch occupies residues 8-152; that stretch reads CCQPTCCRTT…TCVSSCCQPF (145 aa).

Belongs to the KRTAP type 9 family. As to quaternary structure, interacts with hair keratins.

Its function is as follows. In the hair cortex, hair keratin intermediate filaments are embedded in an interfilamentous matrix, consisting of hair keratin-associated proteins (KRTAP), which are essential for the formation of a rigid and resistant hair shaft through their extensive disulfide bond cross-linking with abundant cysteine residues of hair keratins. The matrix proteins include the high-sulfur and high-glycine-tyrosine keratins. The protein is Keratin-associated protein 9-4 (KRTAP9-4) of Homo sapiens (Human).